A 348-amino-acid chain; its full sequence is Histidinol-phosphate aminotransferase (348 aa).

At Lys210 the chain carries N6-(pyridoxal phosphate)lysine.

It belongs to the class-II pyridoxal-phosphate-dependent aminotransferase family. Histidinol-phosphate aminotransferase subfamily. As to quaternary structure, homodimer. Pyridoxal 5'-phosphate is required as a cofactor.

It catalyses the reaction L-histidinol phosphate + 2-oxoglutarate = 3-(imidazol-4-yl)-2-oxopropyl phosphate + L-glutamate. It functions in the pathway amino-acid biosynthesis; L-histidine biosynthesis; L-histidine from 5-phospho-alpha-D-ribose 1-diphosphate: step 7/9. The protein is Histidinol-phosphate aminotransferase of Pseudomonas putida (strain W619).